A 75-amino-acid chain; its full sequence is MIYKVLYQKDQIVNPRRETTKTLFLEADNVVAARTMVEDNTPYNIELIQELTGNSLAYEKQNPDFKLTTFKSEDK.

This sequence belongs to the RNA polymerase subunit epsilon family. RNAP is composed of a core of 2 alpha, a beta and a beta' subunit. The core is associated with a delta subunit, and at least one of epsilon or omega. When a sigma factor is associated with the core the holoenzyme is formed, which can initiate transcription.

It carries out the reaction RNA(n) + a ribonucleoside 5'-triphosphate = RNA(n+1) + diphosphate. Functionally, a non-essential component of RNA polymerase (RNAP). The sequence is that of DNA-directed RNA polymerase subunit epsilon from Lactobacillus gasseri (strain ATCC 33323 / DSM 20243 / BCRC 14619 / CIP 102991 / JCM 1131 / KCTC 3163 / NCIMB 11718 / NCTC 13722 / AM63).